The following is a 57-amino-acid chain: Large ribosomal subunit protein bL32 (57 aa).

The protein belongs to the bacterial ribosomal protein bL32 family.

This chain is Large ribosomal subunit protein bL32 (rpmF), found in Halalkalibacterium halodurans (strain ATCC BAA-125 / DSM 18197 / FERM 7344 / JCM 9153 / C-125) (Bacillus halodurans).